Here is a 185-residue protein sequence, read N- to C-terminus: Elongation factor P (185 aa).

This sequence belongs to the elongation factor P family.

It is found in the cytoplasm. It participates in protein biosynthesis; polypeptide chain elongation. Involved in peptide bond synthesis. Stimulates efficient translation and peptide-bond synthesis on native or reconstituted 70S ribosomes in vitro. Probably functions indirectly by altering the affinity of the ribosome for aminoacyl-tRNA, thus increasing their reactivity as acceptors for peptidyl transferase. The sequence is that of Elongation factor P from Bacillus mycoides (strain KBAB4) (Bacillus weihenstephanensis).